Here is a 20-residue protein sequence, read N- to C-terminus: Pregnancy-associated glycoprotein 61C (20 aa).

Belongs to the peptidase A1 family. Post-translationally, N-glycosylated. In terms of tissue distribution, expressed in chorionic epithelium (trophectoderm).

The protein localises to the secreted. It localises to the extracellular space. The sequence is that of Pregnancy-associated glycoprotein 61C from Bubalus bubalis (Domestic water buffalo).